We begin with the raw amino-acid sequence, 438 residues long: Glutamyl-tRNA reductase (438 aa).

Substrate-binding positions include 55-58, serine 118, 123-125, and glutamine 129; these read TCNR and ETQ. Residue cysteine 56 is the Nucleophile of the active site. Position 198-203 (198-203) interacts with NADP(+); that stretch reads GAGDMI.

This sequence belongs to the glutamyl-tRNA reductase family. As to quaternary structure, homodimer.

The enzyme catalyses (S)-4-amino-5-oxopentanoate + tRNA(Glu) + NADP(+) = L-glutamyl-tRNA(Glu) + NADPH + H(+). It functions in the pathway porphyrin-containing compound metabolism; protoporphyrin-IX biosynthesis; 5-aminolevulinate from L-glutamyl-tRNA(Glu): step 1/2. Catalyzes the NADPH-dependent reduction of glutamyl-tRNA(Glu) to glutamate 1-semialdehyde (GSA). The chain is Glutamyl-tRNA reductase from Polynucleobacter asymbioticus (strain DSM 18221 / CIP 109841 / QLW-P1DMWA-1) (Polynucleobacter necessarius subsp. asymbioticus).